The following is a 397-amino-acid chain: Staphylopine export protein (397 aa).

Transmembrane regions (helical) follow at residues 12–32, 38–58, 77–97, 102–122, 134–154, 158–178, 217–237, 239–259, 285–305, 309–329, 337–357, and 363–383; these read LYIL…FIPL, GATN…AMVF, IILI…LEGY, VMQG…IIDA, LYSL…VGIW, NISL…FFGY, GIIM…VPLY, VSLG…AVVA, LLVI…IIFY, ILIG…LSFV, MLLG…GALM, and LVGF…IMIM.

Belongs to the major facilitator superfamily.

Its subcellular location is the cell membrane. Functionally, involved in the export of the metallophore staphylopine. This is Staphylopine export protein from Staphylococcus aureus (strain Mu50 / ATCC 700699).